We begin with the raw amino-acid sequence, 958 residues long: Structure-specific endonuclease subunit SLX4 (958 aa).

Disordered regions lie at residues 89-123, 183-209, 326-400, 531-589, 594-613, and 655-849; these read AESP…KGKT, QKKA…GPID, LATA…LSPT, DLTI…EQHQ, QSNT…SFEL, and STAA…SPPA. Residues 109-121 show a composition bias toward basic residues; that stretch reads KKPRTAGARKKKG. A compositionally biased stretch (basic and acidic residues) spans 332–341; it reads RRPEEAERST. The span at 342–351 shows a compositional bias: polar residues; the sequence is LSRQQDTHIP. The span at 364–373 shows a compositional bias: low complexity; it reads AASKSASAKP. The span at 374-389 shows a compositional bias: basic residues; it reads KAAKKAPKPRATKKKQ. Positions 600-610 are enriched in pro residues; that stretch reads QPQPAPPPPPS. 3 stretches are compositionally biased toward low complexity: residues 655–666, 775–787, and 821–838; these read STAAQAAMSTSA, TTSP…RAKA, and PDSG…SSPD.

This sequence belongs to the SLX4 family. As to quaternary structure, forms a heterodimer with SLX1. Post-translationally, phosphorylated in response to DNA damage.

Its subcellular location is the nucleus. Its function is as follows. Regulatory subunit of the SLX1-SLX4 structure-specific endonuclease that resolves DNA secondary structures generated during DNA repair and recombination. Has endonuclease activity towards branched DNA substrates, introducing single-strand cuts in duplex DNA close to junctions with ss-DNA. In Chaetomium globosum (strain ATCC 6205 / CBS 148.51 / DSM 1962 / NBRC 6347 / NRRL 1970) (Soil fungus), this protein is Structure-specific endonuclease subunit SLX4.